The chain runs to 513 residues: ATP synthase subunit alpha (513 aa).

169 to 176 (GDRQTGKT) is a binding site for ATP.

Belongs to the ATPase alpha/beta chains family. In terms of assembly, F-type ATPases have 2 components, CF(1) - the catalytic core - and CF(0) - the membrane proton channel. CF(1) has five subunits: alpha(3), beta(3), gamma(1), delta(1), epsilon(1). CF(0) has three main subunits: a(1), b(2) and c(9-12). The alpha and beta chains form an alternating ring which encloses part of the gamma chain. CF(1) is attached to CF(0) by a central stalk formed by the gamma and epsilon chains, while a peripheral stalk is formed by the delta and b chains.

The protein resides in the cell inner membrane. It carries out the reaction ATP + H2O + 4 H(+)(in) = ADP + phosphate + 5 H(+)(out). Its function is as follows. Produces ATP from ADP in the presence of a proton gradient across the membrane. The alpha chain is a regulatory subunit. The chain is ATP synthase subunit alpha from Cupriavidus metallidurans (strain ATCC 43123 / DSM 2839 / NBRC 102507 / CH34) (Ralstonia metallidurans).